The following is an 88-amino-acid chain: HssA/B-like protein 11 (88 aa).

This sequence belongs to the hssA/B family.

The protein is HssA/B-like protein 11 (hssl11) of Dictyostelium discoideum (Social amoeba).